The chain runs to 326 residues: N-acetyl-gamma-glutamyl-phosphate reductase (326 aa).

Residue Cys155 is part of the active site.

This sequence belongs to the NAGSA dehydrogenase family. Type 1 subfamily.

The protein resides in the cytoplasm. The enzyme catalyses N-acetyl-L-glutamate 5-semialdehyde + phosphate + NADP(+) = N-acetyl-L-glutamyl 5-phosphate + NADPH + H(+). The protein operates within amino-acid biosynthesis; L-arginine biosynthesis; N(2)-acetyl-L-ornithine from L-glutamate: step 3/4. Functionally, catalyzes the NADPH-dependent reduction of N-acetyl-5-glutamyl phosphate to yield N-acetyl-L-glutamate 5-semialdehyde. In Shewanella frigidimarina (strain NCIMB 400), this protein is N-acetyl-gamma-glutamyl-phosphate reductase.